We begin with the raw amino-acid sequence, 303 residues long: Sulfate adenylyltransferase subunit 2 (303 aa).

The protein belongs to the PAPS reductase family. CysD subfamily. In terms of assembly, heterodimer composed of CysD, the smaller subunit, and CysN.

It catalyses the reaction sulfate + ATP + H(+) = adenosine 5'-phosphosulfate + diphosphate. The protein operates within sulfur metabolism; hydrogen sulfide biosynthesis; sulfite from sulfate: step 1/3. With CysN forms the ATP sulfurylase (ATPS) that catalyzes the adenylation of sulfate producing adenosine 5'-phosphosulfate (APS) and diphosphate, the first enzymatic step in sulfur assimilation pathway. APS synthesis involves the formation of a high-energy phosphoric-sulfuric acid anhydride bond driven by GTP hydrolysis by CysN coupled to ATP hydrolysis by CysD. The polypeptide is Sulfate adenylyltransferase subunit 2 (Aliarcobacter butzleri (strain RM4018) (Arcobacter butzleri)).